A 399-amino-acid chain; its full sequence is Tryptophan synthase beta chain (399 aa).

Lysine 92 bears the N6-(pyridoxal phosphate)lysine mark.

The protein belongs to the TrpB family. Tetramer of two alpha and two beta chains. Pyridoxal 5'-phosphate serves as cofactor.

The enzyme catalyses (1S,2R)-1-C-(indol-3-yl)glycerol 3-phosphate + L-serine = D-glyceraldehyde 3-phosphate + L-tryptophan + H2O. It participates in amino-acid biosynthesis; L-tryptophan biosynthesis; L-tryptophan from chorismate: step 5/5. The beta subunit is responsible for the synthesis of L-tryptophan from indole and L-serine. The protein is Tryptophan synthase beta chain of Legionella pneumophila (strain Paris).